An 820-amino-acid chain; its full sequence is Sodium/hydrogen exchanger 1 (820 aa).

Residues 1-102 (MMLRWSGIWG…FPVLDIDYLH (102 aa)) lie on the Extracellular side of the membrane. The interval 44 to 71 (ASTIRGSEPPRERSIGDVTTAPSEPLHH) is disordered. Residues 103-125 (VRTPFEISLWILLACLMKIGFHV) traverse the membrane as a helical segment. At 126-134 (IPTISSIVP) the chain is on the cytoplasmic side. Residues 135–152 (ESCLLIVVGLLVGGLIKG) form a helical membrane-spanning segment. Residues 153-162 (VGETPPFLQS) are Extracellular-facing. A helical transmembrane segment spans residues 163–180 (DVFFLFLLPPIILDAGYF). Topologically, residues 181–190 (LPLRQFTENL) are cytoplasmic. Residues 191 to 219 (GTILIFAVVGTLWNAFFLGGLLYAVCLVG) form a helical membrane-spanning segment. The Extracellular segment spans residues 220-226 (GEQINNI). A helical transmembrane segment spans residues 227–253 (GLLDTLLFGSIISAVDPVAVLAVFEEI). Residues 254 to 256 (HIN) are Cytoplasmic-facing. Residues 257–287 (ELLHILVFGESLLNDAVTVVLYHLFEEFASY) form a helical membrane-spanning segment. Residues 288-291 (EYVG) are Extracellular-facing. Residues 292 to 326 (ISDIFLGFLSFFVVSLGGVFVGVVYGVIAAFTSRF) form a helical membrane-spanning segment. At 327-332 (TSHIRV) the chain is on the cytoplasmic side. Residues 333–345 (IEPLFVFLYSYMA) traverse the membrane as a helical segment. Topologically, residues 346–354 (YLSAELFHL) are extracellular. Residues 355–375 (SGIMALIASGVVMRPYVEANI) traverse the membrane as a helical segment. The Cytoplasmic portion of the chain corresponds to 376-377 (SH). The chain crosses the membrane as a helical span at residues 378–408 (KSHTTIKYFLKMWSSVSETLIFIFLGVSTVA). At 409 to 414 (GSHQWN) the chain is on the extracellular side. The chain crosses the membrane as a helical span at residues 415–442 (WTFVISTLLFCLIARVLGVLVLTWFINK). At 443-448 (FRIVKL) the chain is on the cytoplasmic side. The helical transmembrane segment at 449 to 473 (TPKDQFIIAYGGLRGAIAFSLGYLL) threads the bilayer. Residues 474–479 (DKKHFP) lie on the Extracellular side of the membrane. Residues 480-509 (MCDLFLTAIITVIFFTVFVQGMTIRPLVDL) traverse the membrane as a helical segment. Residues 505-571 (PLVDLLAVKK…VKKCLIAGER (67 aa)) form an interaction with TESC region. Topologically, residues 510 to 820 (LAVKKKQETK…EGEPFIPKGQ (311 aa)) are cytoplasmic. Positions 513–520 (KKKQETKR) are PI(4,5)P2-binding region. The segment at 519 to 549 (KRSINEEIHTQFLDHLLTGIEDICGHYGHHH) is interaction with CHP2. The confers pH-dependent PI(4,5)P2 binding stretch occupies residues 544-549 (HYGHHH). A PI(4,5)P2-binding region region spans residues 556-564 (RFNKKYVKK). Phosphoserine occurs at positions 603 and 606. A Phosphothreonine modification is found at Thr-607. Residues Ser-609 and Ser-652 each carry the phosphoserine modification. The interaction with TESC stretch occupies residues 637 to 820 (KILRSNLQKT…EGEPFIPKGQ (184 aa)). An interaction with CALM1 region spans residues 637-820 (KILRSNLQKT…EGEPFIPKGQ (184 aa)). The segment at 688–691 (LTVP) is interaction with PPP3CA. Phosphoserine is present on residues Ser-697, Ser-701, and Ser-707. The segment at 719-724 (PVITID) is interaction with PPP3CA. 3 positions are modified to phosphoserine: Ser-727, Ser-730, and Ser-733. A disordered region spans residues 747-820 (GLKRGPRTTP…EGEPFIPKGQ (74 aa)). 2 positions are modified to phosphothreonine: Thr-755 and Thr-784. 2 positions are modified to phosphoserine: Ser-790 and Ser-801.

It belongs to the monovalent cation:proton antiporter 1 (CPA1) transporter (TC 2.A.36) family. Homodimer; dimerization is crucial for its function. Oligomer. Interacts with CALM1 in a calcium-dependent manner. Interacts with TESC. Interacts (via residues 504-563) with CHP1. The interaction with CHP1 occurs at the plasma membrane in a calcium-dependent manner. Interacts with CHP2. The interaction with CHP2 occurs in a calcium-dependent manner. Interacts with EZR; regulates the cytoskeletal interactions of SLC9A1 and promotes stress fiber formation. N-glycosylated and O-glycosylated in the N-terminal region. In terms of processing, ubiquitinated, leading to its degradation by the proteasome. Ubiquitination is reduced by CHP1. Post-translationally, palmitoylated; may play a major role in SLC9A1 regulation. Phosphorylation at Thr-784 increases SLC9A1 activity; specifically dephosphorylated by PPP3CA. Specifically dephosphorylated at Thr-784 by PPP3CA that negatively regulates SLC9A1 activity. Phosphorylation at Ser-652 by AKT1 reduces SLC9A1 binding to CALM1. In terms of tissue distribution, widely expressed.

It is found in the cell membrane. The protein resides in the basolateral cell membrane. The catalysed reaction is Na(+)(in) + H(+)(out) = Na(+)(out) + H(+)(in). It carries out the reaction Li(+)(out) + H(+)(in) = Li(+)(in) + H(+)(out). The enzyme catalyses Li(+)(in) + Na(+)(out) = Li(+)(out) + Na(+)(in). Its activity is regulated as follows. Activated at acidic pHs. Inhibited by cariporide and eniporide. Inhibited by amiloride and 5-amino-substituted derivatives. Phosphatidylinositol 4,5-bisphosphate (PI(4,5)P2) bind and activates SLC9A1 transporter activity. In terms of biological role, electroneutral Na(+) /H(+) antiporter that extrudes Na(+) in exchange for external protons driven by the inward sodium ion chemical gradient, protecting cells from acidification that occurs from metabolism. Exchanges intracellular H(+) ions for extracellular Na(+) in 1:1 stoichiometry. Plays a key role in maintening intracellular pH neutral and cell volume, and thus is important for cell growth, proliferation, migration and survival. In addition, can transport lithium Li(+) and also functions as a Na(+)/Li(+) antiporter. SLC9A1 also functions in membrane anchoring and organization of scaffolding complexes that coordinate signaling inputs. In Rattus norvegicus (Rat), this protein is Sodium/hydrogen exchanger 1 (Slc9a1).